The sequence spans 147 residues: Nucleoside diphosphate kinase (147 aa).

ATP-binding residues include lysine 9, phenylalanine 57, arginine 85, threonine 91, arginine 102, and asparagine 112. Catalysis depends on histidine 115, which acts as the Pros-phosphohistidine intermediate.

It belongs to the NDK family. In terms of assembly, homotetramer. Mg(2+) serves as cofactor.

It localises to the cytoplasm. The catalysed reaction is a 2'-deoxyribonucleoside 5'-diphosphate + ATP = a 2'-deoxyribonucleoside 5'-triphosphate + ADP. It carries out the reaction a ribonucleoside 5'-diphosphate + ATP = a ribonucleoside 5'-triphosphate + ADP. Major role in the synthesis of nucleoside triphosphates other than ATP. The ATP gamma phosphate is transferred to the NDP beta phosphate via a ping-pong mechanism, using a phosphorylated active-site intermediate. This chain is Nucleoside diphosphate kinase, found in Thermosipho melanesiensis (strain DSM 12029 / CIP 104789 / BI429).